A 118-amino-acid polypeptide reads, in one-letter code: Large ribosomal subunit protein uL23c (118 aa).

Belongs to the universal ribosomal protein uL23 family. As to quaternary structure, part of the 50S ribosomal subunit.

The protein resides in the plastid. Its subcellular location is the chloroplast. Binds to 23S rRNA. The protein is Large ribosomal subunit protein uL23c (rpl23) of Stigeoclonium helveticum (Green alga).